Consider the following 950-residue polypeptide: Glycine dehydrogenase (decarboxylating) (950 aa).

Lys699 carries the post-translational modification N6-(pyridoxal phosphate)lysine.

This sequence belongs to the GcvP family. In terms of assembly, the glycine cleavage system is composed of four proteins: P, T, L and H. Pyridoxal 5'-phosphate serves as cofactor.

It carries out the reaction N(6)-[(R)-lipoyl]-L-lysyl-[glycine-cleavage complex H protein] + glycine + H(+) = N(6)-[(R)-S(8)-aminomethyldihydrolipoyl]-L-lysyl-[glycine-cleavage complex H protein] + CO2. The glycine cleavage system catalyzes the degradation of glycine. The P protein binds the alpha-amino group of glycine through its pyridoxal phosphate cofactor; CO(2) is released and the remaining methylamine moiety is then transferred to the lipoamide cofactor of the H protein. The chain is Glycine dehydrogenase (decarboxylating) from Chromobacterium violaceum (strain ATCC 12472 / DSM 30191 / JCM 1249 / CCUG 213 / NBRC 12614 / NCIMB 9131 / NCTC 9757 / MK).